Consider the following 140-residue polypeptide: Early nodulin-like protein 22 (140 aa).

A signal peptide spans Met-1–Leu-28. A Phytocyanin domain is found at Thr-39–Ala-138. N-linked (GlcNAc...) asparagine glycosylation is present at Asn-85. The cysteines at positions 92 and 126 are disulfide-linked.

It belongs to the early nodulin-like (ENODL) family.

Functionally, may act as a carbohydrate transporter. This is Early nodulin-like protein 22 from Arabidopsis thaliana (Mouse-ear cress).